Here is a 69-residue protein sequence, read N- to C-terminus: uncharacterized protein (69 aa).

This is an uncharacterized protein from Acheta domesticus (House cricket).